Here is a 366-residue protein sequence, read N- to C-terminus: Phospho-N-acetylmuramoyl-pentapeptide-transferase (366 aa).

10 helical membrane-spanning segments follow: residues 3–23, 55–75, 80–100, 118–138, 161–181, 197–217, 235–255, 262–282, 287–307, and 341–361; these read QIFI…PVLI, IAIL…GLVF, PGVS…VGFA, AKLI…LQFP, IAVG…NIVI, LASG…FWQF, PLDL…FLWW, IFMG…LSIT, LLMI…VIQV, and FWLL…GEWL.

Belongs to the glycosyltransferase 4 family. MraY subfamily. The cofactor is Mg(2+).

The protein resides in the cell membrane. The catalysed reaction is UDP-N-acetyl-alpha-D-muramoyl-L-alanyl-gamma-D-glutamyl-meso-2,6-diaminopimeloyl-D-alanyl-D-alanine + di-trans,octa-cis-undecaprenyl phosphate = di-trans,octa-cis-undecaprenyl diphospho-N-acetyl-alpha-D-muramoyl-L-alanyl-D-glutamyl-meso-2,6-diaminopimeloyl-D-alanyl-D-alanine + UMP. It participates in cell wall biogenesis; peptidoglycan biosynthesis. In terms of biological role, catalyzes the initial step of the lipid cycle reactions in the biosynthesis of the cell wall peptidoglycan: transfers peptidoglycan precursor phospho-MurNAc-pentapeptide from UDP-MurNAc-pentapeptide onto the lipid carrier undecaprenyl phosphate, yielding undecaprenyl-pyrophosphoryl-MurNAc-pentapeptide, known as lipid I. The protein is Phospho-N-acetylmuramoyl-pentapeptide-transferase of Corynebacterium urealyticum (strain ATCC 43042 / DSM 7109).